The primary structure comprises 131 residues: Small ribosomal subunit protein uS11 (131 aa).

It belongs to the universal ribosomal protein uS11 family. As to quaternary structure, part of the 30S ribosomal subunit. Interacts with proteins S7 and S18. Binds to IF-3. Interacts with VmlR. Interacts with BrxC.

Functionally, located on the platform of the 30S subunit, it bridges several disparate RNA helices of the 16S rRNA. Forms part of the Shine-Dalgarno cleft in the 70S ribosome. The chain is Small ribosomal subunit protein uS11 from Bacillus subtilis (strain 168).